The sequence spans 369 residues: Anhydro-N-acetylmuramic acid kinase (369 aa).

12 to 19 (GTSMDGVD) provides a ligand contact to ATP.

It belongs to the anhydro-N-acetylmuramic acid kinase family.

The catalysed reaction is 1,6-anhydro-N-acetyl-beta-muramate + ATP + H2O = N-acetyl-D-muramate 6-phosphate + ADP + H(+). It functions in the pathway amino-sugar metabolism; 1,6-anhydro-N-acetylmuramate degradation. The protein operates within cell wall biogenesis; peptidoglycan recycling. Its function is as follows. Catalyzes the specific phosphorylation of 1,6-anhydro-N-acetylmuramic acid (anhMurNAc) with the simultaneous cleavage of the 1,6-anhydro ring, generating MurNAc-6-P. Is required for the utilization of anhMurNAc either imported from the medium or derived from its own cell wall murein, and thus plays a role in cell wall recycling. This Shewanella halifaxensis (strain HAW-EB4) protein is Anhydro-N-acetylmuramic acid kinase.